The chain runs to 158 residues: MKRFKKVVVGGTFDRLHLGHKALLRKAFEVGKIVYIGLTSDEMVKEKPYAEKILPYERRLKDLIEFLEVNNFKGYRIIKINNAIGFTTEIRSLEAIVVSEETYKGALIVNRAREEVGLKPLEIIVIPIIKSKLGCKISSSLIRAGLIDPFGNPMKPRS.

It belongs to the eukaryotic CoaD family.

Its subcellular location is the cytoplasm. It carries out the reaction (R)-4'-phosphopantetheine + ATP + H(+) = 3'-dephospho-CoA + diphosphate. It functions in the pathway cofactor biosynthesis; coenzyme A biosynthesis. In terms of biological role, reversibly transfers an adenylyl group from ATP to 4'-phosphopantetheine, yielding dephospho-CoA (dPCoA) and pyrophosphate. The sequence is that of Phosphopantetheine adenylyltransferase from Pyrococcus horikoshii (strain ATCC 700860 / DSM 12428 / JCM 9974 / NBRC 100139 / OT-3).